The primary structure comprises 257 residues: Adenylate kinase (257 aa).

An ATP-binding site is contributed by 52–57 (GAGKGT). The NMP stretch occupies residues 72-101 (ATGDMLRSQVAKKTELGKEAKKIMDQGGLV). AMP contacts are provided by residues Thr-73, Arg-78, 99–101 (GLV), 128–131 (GFPR), and Gln-135. The LID stretch occupies residues 169 to 206 (GRLVHPASGRSYHKIFNPPKNEMLDDITGEPLIQRSDD). Residues Arg-170 and 179-180 (SY) contribute to the ATP site. Arg-203 and Arg-214 together coordinate AMP. Gln-242 serves as a coordination point for ATP.

This sequence belongs to the adenylate kinase family. AK2 subfamily. As to quaternary structure, monomer.

The protein localises to the cytoplasm. The protein resides in the cytosol. It is found in the mitochondrion intermembrane space. The enzyme catalyses AMP + ATP = 2 ADP. Functionally, catalyzes the reversible transfer of the terminal phosphate group between ATP and AMP. Plays an important role in cellular energy homeostasis and in adenine nucleotide metabolism. Adenylate kinase activity is critical for regulation of the phosphate utilization and the AMP de novo biosynthesis pathways. The chain is Adenylate kinase (adk1) from Aspergillus clavatus (strain ATCC 1007 / CBS 513.65 / DSM 816 / NCTC 3887 / NRRL 1 / QM 1276 / 107).